The sequence spans 309 residues: UPF0282 protein Msed_0584 (309 aa).

This sequence belongs to the UPF0282 family.

The polypeptide is UPF0282 protein Msed_0584 (Metallosphaera sedula (strain ATCC 51363 / DSM 5348 / JCM 9185 / NBRC 15509 / TH2)).